A 114-amino-acid polypeptide reads, in one-letter code: Large ribosomal subunit protein bL20c (114 aa).

The protein belongs to the bacterial ribosomal protein bL20 family.

The protein resides in the plastid. It is found in the chloroplast. In terms of biological role, binds directly to 23S ribosomal RNA and is necessary for the in vitro assembly process of the 50S ribosomal subunit. It is not involved in the protein synthesizing functions of that subunit. In Psilotum nudum (Whisk fern), this protein is Large ribosomal subunit protein bL20c.